Consider the following 110-residue polypeptide: UPF0060 membrane protein BPSL1340 (110 aa).

4 consecutive transmembrane segments (helical) span residues 9–29 (ALFV…WLVL), 34–54 (PAWL…LLTL), 64–84 (AAYG…VDGV), and 86–106 (LSRW…VIAL).

The protein belongs to the UPF0060 family.

The protein localises to the cell inner membrane. The sequence is that of UPF0060 membrane protein BPSL1340 from Burkholderia pseudomallei (strain K96243).